The chain runs to 398 residues: Phospholipase C (398 aa).

Positions 1-28 (MKRKICKALICAALATSLWAGASTKVYA) are cleaved as a signal peptide. Residues tryptophan 29, histidine 39, aspartate 84, histidine 96, histidine 154, aspartate 158, histidine 164, histidine 176, and glutamate 180 each contribute to the Zn(2+) site. One can recognise a Zn-dependent PLC domain in the interval 29–278 (WDGKIDGTGT…HDVSEGNDPS (250 aa)). Residues 275–283 (NDPSVGKNV) form a linker region. Positions 284–398 (KELVAYISTS…ISGNSTYNIK (115 aa)) constitute a PLAT domain. 11 residues coordinate Ca(2+): aspartate 297, glycine 299, threonine 300, aspartate 301, aspartate 321, asparagine 322, glycine 324, asparagine 325, aspartate 326, aspartate 364, and alanine 365.

Belongs to the bacterial zinc-metallophospholipase C family. Requires Ca(2+) as cofactor. Zn(2+) is required as a cofactor.

The protein localises to the secreted. It catalyses the reaction a 1,2-diacyl-sn-glycero-3-phosphocholine + H2O = phosphocholine + a 1,2-diacyl-sn-glycerol + H(+). Bacterial hemolysins are exotoxins that attack blood cell membranes and cause cell rupture. Constitutes an essential virulence factor in gas gangrene. Binds to eukaryotic membranes where it hydrolyzes both phosphatidylcholine and sphingomyelin. The diacylglycerol produced can activate both the arachidonic acid pathway, leading to modulation of the inflammatory response cascade and thrombosis, and protein kinase C, leading to activation of eukaryotic phospholipases and further membrane damage. Acts on human and mouse erythrocytes, but not on rabbit or horse erythrocytes. This Clostridium perfringens (strain ATCC 13124 / DSM 756 / JCM 1290 / NCIMB 6125 / NCTC 8237 / Type A) protein is Phospholipase C (plc).